A 246-amino-acid chain; its full sequence is Probable transcriptional regulatory protein SPO1072 (246 aa).

Residues 1 to 22 (MAGHSKWANIQHRKGRQDAARS) are disordered.

It belongs to the TACO1 family.

It is found in the cytoplasm. This Ruegeria pomeroyi (strain ATCC 700808 / DSM 15171 / DSS-3) (Silicibacter pomeroyi) protein is Probable transcriptional regulatory protein SPO1072.